Here is a 315-residue protein sequence, read N- to C-terminus: Peroxidase 4 (315 aa).

An N-terminal signal peptide occupies residues 1-19 (MAIFKILVLLLSLCCFSQA). Pyrrolidone carboxylic acid is present on Gln-20. Cystine bridges form between Cys-30-Cys-110, Cys-63-Cys-68, Cys-116-Cys-311, and Cys-195-Cys-221. His-61 functions as the Proton acceptor in the catalytic mechanism. Ca(2+) contacts are provided by Asp-62, Val-65, Gly-67, Asp-69, and Ser-71. Pro-158 contacts substrate. His-188 contributes to the heme b binding site. Thr-189 is a binding site for Ca(2+). N-linked (GlcNAc...) asparagine glycosylation occurs at Asn-205. The Ca(2+) site is built by Asp-234, Thr-237, and Asp-242.

This sequence belongs to the peroxidase family. Classical plant (class III) peroxidase subfamily. It depends on heme b as a cofactor. Ca(2+) serves as cofactor.

The protein resides in the secreted. It catalyses the reaction 2 a phenolic donor + H2O2 = 2 a phenolic radical donor + 2 H2O. Functionally, removal of H(2)O(2), oxidation of toxic reductants, biosynthesis and degradation of lignin, suberization, auxin catabolism, response to environmental stresses such as wounding, pathogen attack and oxidative stress. These functions might be dependent on each isozyme/isoform in each plant tissue. The sequence is that of Peroxidase 4 (PER4) from Arabidopsis thaliana (Mouse-ear cress).